Reading from the N-terminus, the 377-residue chain is Bradyzoite pseudokinase 1 (377 aa).

Residues 1–26 form the signal peptide; that stretch reads MANTSVRRRQLLSSVLLLQWLTTVLG. The interval 39-58 is disordered; sequence HGQFPSLRRTEGVSQSGSGH. Positions 48–354 constitute a Protein kinase domain; it reads TEGVSQSGSG…IEEIMKDPLF (307 aa).

This sequence belongs to the protein kinase superfamily. STE Ser/Thr protein kinase family. WNG subfamily. Forms a complex composed of BPK1, MCP4, MAG1, GRA8 and GRA9. Interacts with MCP4. Interacts with MAG1. Interacts with GRA8. Interacts with GRA9.

Its subcellular location is the secreted. Required for the growth, maintenance, and/or stability, and thus infectivity, of bradyzoite cysts. In Toxoplasma gondii, this protein is Bradyzoite pseudokinase 1.